The following is a 52-amino-acid chain: uncharacterized protein (52 aa).

Residues 1–52 are disordered; the sequence is MSLRPCLTPSSMQYSDIYIPTPTPTHHTHTPTPHPHPHTHTHTHHNPNPTLF. Over residues 35–45 the composition is skewed to basic residues; it reads PHPHTHTHTHH.

This is an uncharacterized protein from Saccharomyces cerevisiae (strain ATCC 204508 / S288c) (Baker's yeast).